Reading from the N-terminus, the 109-residue chain is Fluoride-specific ion channel FluC (109 aa).

The next 3 membrane-spanning stretches (helical) occupy residues 21-41 (LTLN…GFFV), 52-72 (ILFS…YFLY), and 84-104 (IIFF…GFWI).

This sequence belongs to the fluoride channel Fluc/FEX (TC 1.A.43) family.

It is found in the cell inner membrane. The enzyme catalyses fluoride(in) = fluoride(out). Fluoride-specific ion channel. Important for reducing fluoride concentration in the cell, thus reducing its toxicity. The chain is Fluoride-specific ion channel FluC from Prochlorococcus marinus (strain MIT 9301).